The chain runs to 199 residues: Nuclear transcription factor Y subunit C-2 (199 aa).

The protein belongs to the NFYC/HAP5 subunit family. Heterotrimeric transcription factor composed of three components, NF-YA, NF-YB and NF-YC. NF-YB and NF-YC must interact and dimerize for NF-YA association and DNA binding. Interacts with HTT1 in both cytoplasm and nucleus. Ubiquitous.

The protein resides in the nucleus. Its subcellular location is the cytoplasm. In terms of biological role, stimulates the transcription of various genes by recognizing and binding to a CCAAT motif in promoters. The sequence is that of Nuclear transcription factor Y subunit C-2 (NFYC2) from Arabidopsis thaliana (Mouse-ear cress).